The primary structure comprises 352 residues: Glutamine synthetase (352 aa).

Positions Tyr3–Thr82 constitute a GS beta-grasp domain. A GS catalytic domain is found at Thr87–Val352. Residues Glu108 and Glu110 each contribute to the Mg(2+) site. Residue Glu164 participates in ATP binding. Mg(2+)-binding residues include Glu169 and Glu176. Residue Glu272 coordinates L-glutamate.

The protein belongs to the glutamine synthetase family. As to quaternary structure, homooctamer and homotetramer. Mg(2+) serves as cofactor.

It is found in the cytoplasm. The enzyme catalyses L-glutamate + NH4(+) + ATP = L-glutamine + ADP + phosphate + H(+). Catalyzes the ATP-dependent biosynthesis of glutamine from glutamate and ammonia. In Frankia alni, this protein is Glutamine synthetase.